Reading from the N-terminus, the 303-residue chain is Ribosomal RNA small subunit methyltransferase A (303 aa).

Positions 37, 39, 64, 85, 115, and 138 each coordinate S-adenosyl-L-methionine.

Belongs to the class I-like SAM-binding methyltransferase superfamily. rRNA adenine N(6)-methyltransferase family. RsmA subfamily.

It localises to the cytoplasm. It carries out the reaction adenosine(1518)/adenosine(1519) in 16S rRNA + 4 S-adenosyl-L-methionine = N(6)-dimethyladenosine(1518)/N(6)-dimethyladenosine(1519) in 16S rRNA + 4 S-adenosyl-L-homocysteine + 4 H(+). Specifically dimethylates two adjacent adenosines (A1518 and A1519) in the loop of a conserved hairpin near the 3'-end of 16S rRNA in the 30S particle. May play a critical role in biogenesis of 30S subunits. The sequence is that of Ribosomal RNA small subunit methyltransferase A from Bifidobacterium adolescentis (strain ATCC 15703 / DSM 20083 / NCTC 11814 / E194a).